The primary structure comprises 616 residues: Dihydroxy-acid dehydratase (616 aa).

Residue D81 coordinates Mg(2+). C122 lines the [2Fe-2S] cluster pocket. D123 and K124 together coordinate Mg(2+). K124 carries the N6-carboxylysine modification. C195 is a [2Fe-2S] cluster binding site. Residue E491 coordinates Mg(2+). S517 serves as the catalytic Proton acceptor.

Belongs to the IlvD/Edd family. In terms of assembly, homodimer. Requires [2Fe-2S] cluster as cofactor. The cofactor is Mg(2+).

The enzyme catalyses (2R)-2,3-dihydroxy-3-methylbutanoate = 3-methyl-2-oxobutanoate + H2O. It catalyses the reaction (2R,3R)-2,3-dihydroxy-3-methylpentanoate = (S)-3-methyl-2-oxopentanoate + H2O. Its pathway is amino-acid biosynthesis; L-isoleucine biosynthesis; L-isoleucine from 2-oxobutanoate: step 3/4. It functions in the pathway amino-acid biosynthesis; L-valine biosynthesis; L-valine from pyruvate: step 3/4. Functions in the biosynthesis of branched-chain amino acids. Catalyzes the dehydration of (2R,3R)-2,3-dihydroxy-3-methylpentanoate (2,3-dihydroxy-3-methylvalerate) into 2-oxo-3-methylpentanoate (2-oxo-3-methylvalerate) and of (2R)-2,3-dihydroxy-3-methylbutanoate (2,3-dihydroxyisovalerate) into 2-oxo-3-methylbutanoate (2-oxoisovalerate), the penultimate precursor to L-isoleucine and L-valine, respectively. This chain is Dihydroxy-acid dehydratase, found in Shigella sonnei (strain Ss046).